The sequence spans 417 residues: Tryptophan synthase beta chain (417 aa).

Residue Lys108 is modified to N6-(pyridoxal phosphate)lysine.

Belongs to the TrpB family. As to quaternary structure, tetramer of two alpha and two beta chains. It depends on pyridoxal 5'-phosphate as a cofactor.

It catalyses the reaction (1S,2R)-1-C-(indol-3-yl)glycerol 3-phosphate + L-serine = D-glyceraldehyde 3-phosphate + L-tryptophan + H2O. It participates in amino-acid biosynthesis; L-tryptophan biosynthesis; L-tryptophan from chorismate: step 5/5. The beta subunit is responsible for the synthesis of L-tryptophan from indole and L-serine. This Mycobacterium leprae (strain TN) protein is Tryptophan synthase beta chain (trpB).